The primary structure comprises 568 residues: Glucose-6-phosphate isomerase, cytosolic 1 (568 aa).

Catalysis depends on Glu360, which acts as the Proton donor. Active-site residues include His391 and Lys516.

This sequence belongs to the GPI family. Homodimer.

It localises to the cytoplasm. The catalysed reaction is alpha-D-glucose 6-phosphate = beta-D-fructose 6-phosphate. The protein operates within carbohydrate degradation; glycolysis; D-glyceraldehyde 3-phosphate and glycerone phosphate from D-glucose: step 2/4. The chain is Glucose-6-phosphate isomerase, cytosolic 1 (PGIC1) from Clarkia xantiana (Gunsight clarkia).